Reading from the N-terminus, the 311-residue chain is Protoheme IX farnesyltransferase (311 aa).

9 helical membrane passes run 32–52, 53–73, 104–124, 125–145, 153–173, 180–200, 224–244, 245–265, and 285–305; these read VMSL…VPIN, PWYG…AGAL, FIFG…FINW, FAAF…TIWL, IVIG…VTTG, FLLF…LSLF, KQIL…CFTG, LGGV…IYFA, and FFFS…ESLV.

This sequence belongs to the UbiA prenyltransferase family. Protoheme IX farnesyltransferase subfamily.

Its subcellular location is the cell inner membrane. It carries out the reaction heme b + (2E,6E)-farnesyl diphosphate + H2O = Fe(II)-heme o + diphosphate. It participates in porphyrin-containing compound metabolism; heme O biosynthesis; heme O from protoheme: step 1/1. Functionally, converts heme B (protoheme IX) to heme O by substitution of the vinyl group on carbon 2 of heme B porphyrin ring with a hydroxyethyl farnesyl side group. The polypeptide is Protoheme IX farnesyltransferase (Bartonella tribocorum (strain CIP 105476 / IBS 506)).